Reading from the N-terminus, the 261-residue chain is 4-phosphopantoate--beta-alanine ligase (261 aa).

Residues Arg17, Arg39, 181-183, 187-188, and 199-200 each bind ATP; these read DLN, RS, and NI.

This sequence belongs to the archaeal phosphopantothenate synthetase family. In terms of assembly, homodimer.

The catalysed reaction is (R)-4-phosphopantoate + beta-alanine + ATP = (R)-4'-phosphopantothenate + AMP + diphosphate + H(+). The protein operates within cofactor biosynthesis; coenzyme A biosynthesis. Activity is not affected by 4'-phosphopantothenate or CoA/acetyl-CoA. In terms of biological role, catalyzes the condensation of (R)-4-phosphopantoate and beta-alanine to 4'-phosphopantothenate in the CoA biosynthesis pathway. Cannot use (R)-pantoate as substrate and thus does not display pantothenate synthetase (PS) activity. Displays strict specificity for its natural substrates, 4-phosphopantoate, ATP and beta-alanine. This is 4-phosphopantoate--beta-alanine ligase from Thermococcus kodakarensis (strain ATCC BAA-918 / JCM 12380 / KOD1) (Pyrococcus kodakaraensis (strain KOD1)).